Consider the following 122-residue polypeptide: MALKTFELRKQSQENLAEQLQELRQELASLRVQKIAGGSGSKLSKIKTTRKDIARILTVINESNRLAAREAYKNKKYIPLDLRQKKTRAIRRALTPYEQSRKTLKQIKKERYFPLRKYALKA.

The residue at position 12 (Ser12) is a Phosphoserine.

This sequence belongs to the universal ribosomal protein uL29 family. As to quaternary structure, component of the large ribosomal subunit (LSU). Mature yeast ribosomes consist of a small (40S) and a large (60S) subunit. The 40S small subunit contains 1 molecule of ribosomal RNA (18S rRNA) and at least 33 different proteins. The large 60S subunit contains 3 rRNA molecules (25S, 5.8S and 5S rRNA) and at least 46 different proteins. uL29 is associated with the polypeptide exit tunnel.

It is found in the cytoplasm. It localises to the nucleus. The protein localises to the nucleolus. Component of the ribosome, a large ribonucleoprotein complex responsible for the synthesis of proteins in the cell. The small ribosomal subunit (SSU) binds messenger RNAs (mRNAs) and translates the encoded message by selecting cognate aminoacyl-transfer RNA (tRNA) molecules. The large subunit (LSU) contains the ribosomal catalytic site termed the peptidyl transferase center (PTC), which catalyzes the formation of peptide bonds, thereby polymerizing the amino acids delivered by tRNAs into a polypeptide chain. The nascent polypeptides leave the ribosome through a tunnel in the LSU and interact with protein factors that function in enzymatic processing, targeting, and the membrane insertion of nascent chains at the exit of the ribosomal tunnel. This is Large ribosomal subunit protein uL29 (rpl35) from Schizosaccharomyces pombe (strain 972 / ATCC 24843) (Fission yeast).